A 362-amino-acid chain; its full sequence is Cobalt-precorrin-5B C(1)-methyltransferase (362 aa).

The protein belongs to the CbiD family.

The enzyme catalyses Co-precorrin-5B + S-adenosyl-L-methionine = Co-precorrin-6A + S-adenosyl-L-homocysteine. The protein operates within cofactor biosynthesis; adenosylcobalamin biosynthesis; cob(II)yrinate a,c-diamide from sirohydrochlorin (anaerobic route): step 6/10. In terms of biological role, catalyzes the methylation of C-1 in cobalt-precorrin-5B to form cobalt-precorrin-6A. The sequence is that of Cobalt-precorrin-5B C(1)-methyltransferase from Burkholderia lata (strain ATCC 17760 / DSM 23089 / LMG 22485 / NCIMB 9086 / R18194 / 383).